The chain runs to 205 residues: Molybdenum cofactor guanylyltransferase (205 aa).

Residues 14-16 (LAG), Lys27, Asp77, and Asp107 contribute to the GTP site. Asp107 contributes to the Mg(2+) binding site.

Belongs to the MobA family. As to quaternary structure, monomer. Mg(2+) is required as a cofactor.

The protein localises to the cytoplasm. It catalyses the reaction Mo-molybdopterin + GTP + H(+) = Mo-molybdopterin guanine dinucleotide + diphosphate. In terms of biological role, transfers a GMP moiety from GTP to Mo-molybdopterin (Mo-MPT) cofactor (Moco or molybdenum cofactor) to form Mo-molybdopterin guanine dinucleotide (Mo-MGD) cofactor. The chain is Molybdenum cofactor guanylyltransferase from Burkholderia vietnamiensis (strain G4 / LMG 22486) (Burkholderia cepacia (strain R1808)).